The primary structure comprises 431 residues: Trigger factor (431 aa).

Positions 161 to 245 constitute a PPIase FKBP-type domain; that stretch reads TDIVIGDVQK…VKEIKRMELP (85 aa).

The protein belongs to the FKBP-type PPIase family. Tig subfamily.

Its subcellular location is the cytoplasm. It catalyses the reaction [protein]-peptidylproline (omega=180) = [protein]-peptidylproline (omega=0). In terms of biological role, involved in protein export. Acts as a chaperone by maintaining the newly synthesized protein in an open conformation. Functions as a peptidyl-prolyl cis-trans isomerase. The sequence is that of Trigger factor from Chloroherpeton thalassium (strain ATCC 35110 / GB-78).